A 61-amino-acid chain; its full sequence is Potassium channel toxin alpha-KTx 3.18 (61 aa).

The N-terminal stretch at 1-23 (MKMFFTVLVTLFVCSMIIGICEG) is a signal peptide. 3 disulfide bridges follow: Cys-30/Cys-50, Cys-36/Cys-55, and Cys-40/Cys-57. A Lysine amide modification is found at Lys-60.

Expressed by the venom gland.

It localises to the secreted. Its function is as follows. Inhibits voltage-gated potassium channel rKv1.1/KCNA1 at nanomolar ranges (IC(50)=90 +-2 nM, reduction of current by 30% at 50 nM or toxin). The protein is Potassium channel toxin alpha-KTx 3.18 of Mesobuthus eupeus (Lesser Asian scorpion).